The chain runs to 324 residues: Delta-aminolevulinic acid dehydratase (324 aa).

Zn(2+) contacts are provided by Cys120, Cys122, and Cys130. Lys195 acts as the Schiff-base intermediate with substrate in catalysis. 5-aminolevulinate contacts are provided by Arg205 and Arg217. Glu233 lines the Mg(2+) pocket. Lys248 serves as the catalytic Schiff-base intermediate with substrate. 5-aminolevulinate-binding residues include Ser274 and Tyr313.

Belongs to the ALAD family. In terms of assembly, homooctamer. Zn(2+) serves as cofactor.

It carries out the reaction 2 5-aminolevulinate = porphobilinogen + 2 H2O + H(+). It functions in the pathway porphyrin-containing compound metabolism; protoporphyrin-IX biosynthesis; coproporphyrinogen-III from 5-aminolevulinate: step 1/4. Functionally, catalyzes an early step in the biosynthesis of tetrapyrroles. Binds two molecules of 5-aminolevulinate per subunit, each at a distinct site, and catalyzes their condensation to form porphobilinogen. This Bacillus subtilis (strain 168) protein is Delta-aminolevulinic acid dehydratase (hemB).